A 317-amino-acid chain; its full sequence is Ribose-phosphate pyrophosphokinase (317 aa).

ATP-binding positions include D41 to E43 and R100 to Q101. Residues H134 and D174 each coordinate Mg(2+). The active site involves K197. D-ribose 5-phosphate contacts are provided by residues R199, D223, and D227–T231.

This sequence belongs to the ribose-phosphate pyrophosphokinase family. Class I subfamily. Homohexamer. Mg(2+) is required as a cofactor.

The protein resides in the cytoplasm. The enzyme catalyses D-ribose 5-phosphate + ATP = 5-phospho-alpha-D-ribose 1-diphosphate + AMP + H(+). Its pathway is metabolic intermediate biosynthesis; 5-phospho-alpha-D-ribose 1-diphosphate biosynthesis; 5-phospho-alpha-D-ribose 1-diphosphate from D-ribose 5-phosphate (route I): step 1/1. Its function is as follows. Involved in the biosynthesis of the central metabolite phospho-alpha-D-ribosyl-1-pyrophosphate (PRPP) via the transfer of pyrophosphoryl group from ATP to 1-hydroxyl of ribose-5-phosphate (Rib-5-P). This chain is Ribose-phosphate pyrophosphokinase, found in Bradyrhizobium diazoefficiens (strain JCM 10833 / BCRC 13528 / IAM 13628 / NBRC 14792 / USDA 110).